Consider the following 341-residue polypeptide: Endolytic peptidoglycan transglycosylase RlpA (341 aa).

An N-terminal signal peptide occupies residues 1–26; it reads MSKRVRSSLILPAVCGLGLAAVLLSS. The N-palmitoyl cysteine moiety is linked to residue Cys27. A lipid anchor (S-diacylglycerol cysteine) is attached at Cys27. One can recognise an SPOR domain in the interval 260–341; it reads SLPADGLYLQ…LGQPTLVRPD (82 aa).

Belongs to the RlpA family.

It localises to the cell membrane. Its function is as follows. Lytic transglycosylase with a strong preference for naked glycan strands that lack stem peptides. Required for efficient separation of daughter cells and maintenance of rod shape. This is Endolytic peptidoglycan transglycosylase RlpA from Pseudomonas aeruginosa (strain UCBPP-PA14).